We begin with the raw amino-acid sequence, 60 residues long: Toxin TdNa2 (60 aa).

An LCN-type CS-alpha/beta domain is found at 1-59; sequence RDAYPADWRGCKPSCPWGSSSWCNEECTSLGGSSGYCAWPACWCYGLPDSVRYYNNKCH. Cystine bridges form between C11-C58, C15-C37, C23-C42, and C27-C44.

This sequence belongs to the long (4 C-C) scorpion toxin superfamily. Sodium channel inhibitor family. Beta subfamily. As to expression, expressed by the venom gland.

It is found in the secreted. In terms of biological role, inhibits the sodium currents (Nav) in an apparent irreversible manner. Produces small depolarization and induces repetitive firing in squid axons. Is specific for arthropods (crickets, triatomides, crabs and squids), but is non-toxic to mice. The protein is Toxin TdNa2 of Tityus discrepans (Venezuelan scorpion).